Reading from the N-terminus, the 525-residue chain is Protein ea59 (525 aa).

The chain is Protein ea59 (ea59) from Escherichia coli (Bacteriophage lambda).